A 156-amino-acid polypeptide reads, in one-letter code: Small ribosomal subunit protein uS7 (156 aa).

This sequence belongs to the universal ribosomal protein uS7 family. Part of the 30S ribosomal subunit. Contacts proteins S9 and S11.

One of the primary rRNA binding proteins, it binds directly to 16S rRNA where it nucleates assembly of the head domain of the 30S subunit. Is located at the subunit interface close to the decoding center, probably blocks exit of the E-site tRNA. The sequence is that of Small ribosomal subunit protein uS7 from Paraburkholderia phymatum (strain DSM 17167 / CIP 108236 / LMG 21445 / STM815) (Burkholderia phymatum).